A 425-amino-acid polypeptide reads, in one-letter code: Serine--tRNA ligase (425 aa).

L-serine is bound at residue 230–232 (TAE). Position 261–263 (261–263 (RSE)) interacts with ATP. Glu284 is an L-serine binding site. ATP is bound at residue 348–351 (EISS). Ser384 serves as a coordination point for L-serine.

Belongs to the class-II aminoacyl-tRNA synthetase family. Type-1 seryl-tRNA synthetase subfamily. Homodimer. The tRNA molecule binds across the dimer.

Its subcellular location is the cytoplasm. It catalyses the reaction tRNA(Ser) + L-serine + ATP = L-seryl-tRNA(Ser) + AMP + diphosphate + H(+). The catalysed reaction is tRNA(Sec) + L-serine + ATP = L-seryl-tRNA(Sec) + AMP + diphosphate + H(+). The protein operates within aminoacyl-tRNA biosynthesis; selenocysteinyl-tRNA(Sec) biosynthesis; L-seryl-tRNA(Sec) from L-serine and tRNA(Sec): step 1/1. Catalyzes the attachment of serine to tRNA(Ser). Is also able to aminoacylate tRNA(Sec) with serine, to form the misacylated tRNA L-seryl-tRNA(Sec), which will be further converted into selenocysteinyl-tRNA(Sec). The polypeptide is Serine--tRNA ligase (Streptococcus gordonii (strain Challis / ATCC 35105 / BCRC 15272 / CH1 / DL1 / V288)).